The following is a 577-amino-acid chain: Outer spore wall assembly protein SHE10 (577 aa).

Residues 1–23 (MGKLIKLITTLTVLVSLLQYCCE) form the signal peptide. Coiled-coil stretches lie at residues 379–416 (NETR…ENVE) and 513–561 (ILRS…EEDV). Basic and acidic residues predominate over residues 525–545 (RERKERERKEREKAAAEEFQR). Residues 525 to 577 (RERKERERKEREKAAAEEFQRQQELLRQQEEEDEEDVSYTSTSTITTTTTMTL) are disordered. The span at 562 to 577 (SYTSTSTITTTTTMTL) shows a compositional bias: low complexity.

This sequence belongs to the SHE10 family. As to quaternary structure, component of the mitochondria-localized RNase mitochondrial RNA-processing (RNase MRP) composed of one single RNA encoded by the NME1 gene and at least 31 proteins. Absent in the nucleus-localized RNase MRP (NuMRP).

The protein resides in the mitochondrion. In terms of biological role, involved in spore wall assembly. May be a component of the mitochondrial RNase MRP (MtMRP), a ribonucleoprotein endoribonuclease involved in the cleaving RNA transcripts to generate primers for DNA replication in mitochondria. This chain is Outer spore wall assembly protein SHE10, found in Saccharomyces cerevisiae (strain YJM789) (Baker's yeast).